The following is a 61-amino-acid chain: Large ribosomal subunit protein bL28 (61 aa).

This sequence belongs to the bacterial ribosomal protein bL28 family.

The protein is Large ribosomal subunit protein bL28 of Geobacillus sp. (strain WCH70).